The following is a 335-amino-acid chain: Dolichyl-diphosphooligosaccharide--protein glycosyltransferase subunit MAGT1 (335 aa).

An N-terminal signal peptide occupies residues 1–29; sequence MAAGWWFWCVSVTVAVALLIVCDVPSVSA. The Extracellular portion of the chain corresponds to 30 to 184; it reads QRKKEMVLSE…DVNIRVIRPP (155 aa). Positions 47–175 constitute a Thioredoxin domain; sequence WTNKRPVIRM…IARWIADRTD (129 aa). Asn71 is a glycosylation site (N-linked (GlcNAc...) asparagine). Cys87 and Cys90 are disulfide-bonded. The chain crosses the membrane as a helical span at residues 185–205; sequence NYAGPLMLGLLLAVIGGLVYL. Topologically, residues 206 to 209 are cytoplasmic; the sequence is RRSN. Residues 210–230 traverse the membrane as a helical segment; that stretch reads MEFLFNKTGWAFAALCFVLAM. Residues 231 to 270 are Extracellular-facing; the sequence is TSGQMWNHIRGPPYAHKNPHTGHVNYIHGSSQAQFVAETH. A helical transmembrane segment spans residues 271-291; the sequence is IVLLFNGGVTLGMVLLCEAAT. The Cytoplasmic segment spans residues 292–300; sequence SDMDIGKRK. A helical membrane pass occupies residues 301-321; sequence IMCVAGIGLVVLFFSWMLSIF. The Extracellular portion of the chain corresponds to 322–335; the sequence is RSKYHGYPYSFLMS.

This sequence belongs to the OST3/OST6 family. Accessory component of the STT3B-containing form of the oligosaccharyltransferase (OST) complex. OST exists in two different complex forms which contain common core subunits RPN1, RPN2, OST48, OST4, DAD1 and TMEM258, either STT3A or STT3B as catalytic subunits, and form-specific accessory subunits. OST can form stable complexes with the Sec61 complex or with both the Sec61 and TRAP complexes. The association of TUSC3 or MAGT1 with the STT3B-containing complex seems to be mutually exclusvice.

The protein resides in the cell membrane. It localises to the endoplasmic reticulum. It is found in the endoplasmic reticulum membrane. The protein operates within protein modification; protein glycosylation. Functionally, accessory component of the STT3B-containing form of the N-oligosaccharyl transferase (OST) complex which catalyzes the transfer of a high mannose oligosaccharide from a lipid-linked oligosaccharide donor to an asparagine residue within an Asn-X-Ser/Thr consensus motif in nascent polypeptide chains. Involved in N-glycosylation of STT3B-dependent substrates. Specifically required for the glycosylation of a subset of acceptor sites that are near cysteine residues; in this function seems to act redundantly with TUSC3. In its oxidized form proposed to form transient mixed disulfides with a glycoprotein substrate to facilitate access of STT3B to the unmodified acceptor site. Also has oxidoreductase-independent functions in the STT3B-containing OST complex possibly involving substrate recognition. Could indirectly play a role in Mg(2+) transport in epithelial cells. This is Dolichyl-diphosphooligosaccharide--protein glycosyltransferase subunit MAGT1 from Pongo abelii (Sumatran orangutan).